The sequence spans 51 residues: Putative protein LomR (51 aa).

Belongs to the outer membrane OOP (TC 1.B.6) superfamily. Ail family.

In Escherichia coli (strain K12), this protein is Putative protein LomR (lomR).